Reading from the N-terminus, the 208-residue chain is Protein-L-isoaspartate O-methyltransferase (208 aa).

S59 is an active-site residue.

The protein belongs to the methyltransferase superfamily. L-isoaspartyl/D-aspartyl protein methyltransferase family.

It is found in the cytoplasm. The catalysed reaction is [protein]-L-isoaspartate + S-adenosyl-L-methionine = [protein]-L-isoaspartate alpha-methyl ester + S-adenosyl-L-homocysteine. Functionally, catalyzes the methyl esterification of L-isoaspartyl residues in peptides and proteins that result from spontaneous decomposition of normal L-aspartyl and L-asparaginyl residues. It plays a role in the repair and/or degradation of damaged proteins. The sequence is that of Protein-L-isoaspartate O-methyltransferase from Aliivibrio salmonicida (strain LFI1238) (Vibrio salmonicida (strain LFI1238)).